Here is a 358-residue protein sequence, read N- to C-terminus: Hydroxyproline O-arabinosyltransferase 3 (358 aa).

A helical; Signal-anchor membrane pass occupies residues 8-28 (LLFLLGFGFFVVTYNLLTLIV).

Ubiquitous.

The protein localises to the golgi apparatus. The protein resides in the cis-Golgi network membrane. The catalysed reaction is trans-4-hydroxy-L-prolyl-[protein] + UDP-beta-L-arabinofuranose = O-(beta-L-arabinofuranosyl)-trans-4-hydroxy-L-prolyl-[protein] + UDP + H(+). Its function is as follows. Glycosyltransferase involved in the O-arabinosylation of several proteins including extensins and small signaling peptides. Catalyzes the transfer of the initial L-arabinose to the hydroxyl group of Hyp residues. Contributes redundantly with HPAT1 and HPAT2 to arabinosylation of EXT3, but main contributor to arabinosylation of CLE peptides. The sequence is that of Hydroxyproline O-arabinosyltransferase 3 from Arabidopsis thaliana (Mouse-ear cress).